Consider the following 452-residue polypeptide: Phosphoglucosamine mutase (452 aa).

The Phosphoserine intermediate role is filled by S104. Residues S104, D244, D246, and D248 each coordinate Mg(2+). The residue at position 104 (S104) is a Phosphoserine.

The protein belongs to the phosphohexose mutase family. It depends on Mg(2+) as a cofactor. In terms of processing, activated by phosphorylation.

The enzyme catalyses alpha-D-glucosamine 1-phosphate = D-glucosamine 6-phosphate. Catalyzes the conversion of glucosamine-6-phosphate to glucosamine-1-phosphate. This is Phosphoglucosamine mutase from Pediococcus pentosaceus (strain ATCC 25745 / CCUG 21536 / LMG 10740 / 183-1w).